Here is a 233-residue protein sequence, read N- to C-terminus: Uracil-DNA glycosylase (233 aa).

The active-site Proton acceptor is the D70.

Belongs to the uracil-DNA glycosylase (UDG) superfamily. UNG family.

It is found in the cytoplasm. It catalyses the reaction Hydrolyzes single-stranded DNA or mismatched double-stranded DNA and polynucleotides, releasing free uracil.. Functionally, excises uracil residues from the DNA which can arise as a result of misincorporation of dUMP residues by DNA polymerase or due to deamination of cytosine. In Helicobacter pylori (strain Shi470), this protein is Uracil-DNA glycosylase.